A 374-amino-acid polypeptide reads, in one-letter code: P2Y purinoceptor 11 (374 aa).

Residues 1 to 29 (MAANVSGAKSCPANFLAAADDKLSGFQGD) lie on the Extracellular side of the membrane. An N-linked (GlcNAc...) asparagine glycan is attached at N4. Residues 30–50 (FLWPILVVEFLVAVASNGLAL) traverse the membrane as a helical segment. Residues 51-64 (YRFSIRKQRPWHPA) are Cytoplasmic-facing. Residues 65–85 (VVFSVQLAVSDLLCALTLPPL) traverse the membrane as a helical segment. Residues 86–116 (AAYLYPPKHWRYGEAACRLERFLFTCNLLGS) lie on the Extracellular side of the membrane. C102 and C180 are oxidised to a cystine. Residues 117–137 (VIFITCISLNRYLGIVHPFFA) traverse the membrane as a helical segment. The Cytoplasmic portion of the chain corresponds to 138-146 (RSHLRPKHA). A helical transmembrane segment spans residues 147-167 (WAVSAAGWVLAALLAMPTLSF). At 168-206 (SHLKRPQQGAGNCSVARPEACIKCLGTADHGLAAYRAYS) the chain is on the extracellular side. N179 carries N-linked (GlcNAc...) asparagine glycosylation. A helical membrane pass occupies residues 207–227 (LVLAGLGCGLPLLLTLAAYGA). Over 228 to 245 (LGRAVLRSPGMTVAEKLR) the chain is Cytoplasmic. The chain crosses the membrane as a helical span at residues 246–266 (VAALVASGVALYASSYVPYHI). Topologically, residues 267–308 (MRVLNVDARRRWSTRCPSFADIAQATAALELGPYVGYQVMRG) are extracellular. The chain crosses the membrane as a helical span at residues 309 to 329 (LMPLAFCVHPLLYMAAVPSLG). Residues 330 to 374 (CCCRHCPGYRDSWNPEDAKSTGQALPLNATAAPKPSEPQSRELSQ) are Cytoplasmic-facing. Positions 345 to 374 (EDAKSTGQALPLNATAAPKPSEPQSRELSQ) are disordered.

This sequence belongs to the G-protein coupled receptor 1 family. In terms of tissue distribution, highest expression in liver and spleen.

The protein localises to the cell membrane. Functionally, receptor for ATP and ADP coupled to G-proteins that activate both phosphatidylinositol-calcium and adenylyl cyclase second messenger systems. Not activated by UTP or UDP. This is P2Y purinoceptor 11 (P2RY11) from Homo sapiens (Human).